Here is a 339-residue protein sequence, read N- to C-terminus: 3-isopropylmalate dehydrogenase (339 aa).

Residues R88, R98, R122, and D212 each coordinate substrate. D212, D236, and D240 together coordinate Mg(2+). 272–284 is a binding site for NAD(+); sequence GSAPDIAGQGIAD.

It belongs to the isocitrate and isopropylmalate dehydrogenases family. LeuB type 2 subfamily. As to quaternary structure, homodimer. Mg(2+) serves as cofactor. The cofactor is Mn(2+).

The protein localises to the cytoplasm. It catalyses the reaction (2R,3S)-3-isopropylmalate + NAD(+) = 4-methyl-2-oxopentanoate + CO2 + NADH. The protein operates within amino-acid biosynthesis; L-leucine biosynthesis; L-leucine from 3-methyl-2-oxobutanoate: step 3/4. In terms of biological role, catalyzes the oxidation of 3-carboxy-2-hydroxy-4-methylpentanoate (3-isopropylmalate) to 3-carboxy-4-methyl-2-oxopentanoate. The product decarboxylates to 4-methyl-2 oxopentanoate. The polypeptide is 3-isopropylmalate dehydrogenase (Corynebacterium diphtheriae (strain ATCC 700971 / NCTC 13129 / Biotype gravis)).